We begin with the raw amino-acid sequence, 130 residues long: Small ribosomal subunit protein uS8 (130 aa).

The protein belongs to the universal ribosomal protein uS8 family. In terms of assembly, part of the 30S ribosomal subunit. Contacts proteins S5 and S12.

One of the primary rRNA binding proteins, it binds directly to 16S rRNA central domain where it helps coordinate assembly of the platform of the 30S subunit. The polypeptide is Small ribosomal subunit protein uS8 (Chromohalobacter salexigens (strain ATCC BAA-138 / DSM 3043 / CIP 106854 / NCIMB 13768 / 1H11)).